The following is a 324-amino-acid chain: MTDLIQRPRRLRKSPALRAMFEETTLSLNDLVLPIFVEEEIDDYKAVEAMPGVMRIPEKHLAREIERIANAGIRSVMTFGISHHTDETGSDAWREDGLVARMSRICKQTVPEMIVMSDTCFCEYTSHGHCGVLCEHGVDNDATLENLGKQAVVAAAAGADFIAPSAAMDGQVQAIRQALDAAGFKDTAIMSYSTKFASSFYGPFREAAGSALKGDRKSYQMNPMNRREAIRESLLDEAQGADCLMVKPAGAYLDIVRELRERTELPIGAYQVSGEYAMIKFAALAGAIDEEKVVLESLGSIKRAGADLIFSYFALDLAEKKILR.

Positions 120, 122, and 130 each coordinate Zn(2+). Residue lysine 195 is the Schiff-base intermediate with substrate of the active site. 5-aminolevulinate is bound by residues arginine 205 and arginine 216. Position 232 (glutamate 232) interacts with Mg(2+). The Schiff-base intermediate with substrate role is filled by lysine 247. Positions 273 and 312 each coordinate 5-aminolevulinate.

The protein belongs to the ALAD family. As to quaternary structure, homooctamer. It depends on Zn(2+) as a cofactor.

It catalyses the reaction 2 5-aminolevulinate = porphobilinogen + 2 H2O + H(+). Its pathway is porphyrin-containing compound metabolism; protoporphyrin-IX biosynthesis; coproporphyrinogen-III from 5-aminolevulinate: step 1/4. Allosteric enzyme. Stimulated by magnesium ions. Its function is as follows. Catalyzes an early step in the biosynthesis of tetrapyrroles. Binds two molecules of 5-aminolevulinate per subunit, each at a distinct site, and catalyzes their condensation to form porphobilinogen. This Escherichia coli (strain K12) protein is Delta-aminolevulinic acid dehydratase (hemB).